Here is a 66-residue protein sequence, read N- to C-terminus: Photosystem II reaction center protein J (66 aa).

Residues 36-56 traverse the membrane as a helical segment; sequence LWLVATAGGIAVIFVLGIFFY.

The protein belongs to the PsbJ family. PSII is composed of 1 copy each of membrane proteins PsbA, PsbB, PsbC, PsbD, PsbE, PsbF, PsbH, PsbI, PsbJ, PsbK, PsbL, PsbM, PsbT, PsbX, PsbY, Psb30/Ycf12, peripheral proteins PsbO, CyanoQ (PsbQ), PsbU, PsbV and a large number of cofactors. It forms dimeric complexes.

The protein resides in the cellular thylakoid membrane. One of the components of the core complex of photosystem II (PSII). PSII is a light-driven water:plastoquinone oxidoreductase that uses light energy to abstract electrons from H(2)O, generating O(2) and a proton gradient subsequently used for ATP formation. It consists of a core antenna complex that captures photons, and an electron transfer chain that converts photonic excitation into a charge separation. The sequence is that of Photosystem II reaction center protein J from Prochlorococcus marinus (strain MIT 9215).